Here is a 38-residue protein sequence, read N- to C-terminus: Beta-defensin 1 (38 aa).

3 cysteine pairs are disulfide-bonded: Cys-5–Cys-34, Cys-12–Cys-27, and Cys-17–Cys-35.

Belongs to the beta-defensin family. Monomer. Homodimer. In terms of tissue distribution, neutrophilic granules.

The protein localises to the secreted. The protein resides in the membrane. In terms of biological role, has bactericidal activity. Active against E.coli ML35 but not against S.aureus 502A. May act as a ligand for C-C chemokine receptor CCR6. Positively regulates the sperm motility and bactericidal activity in a CCR6-dependent manner. Binds to CCR6 and triggers Ca2+ mobilization in the sperm which is important for its motility. The polypeptide is Beta-defensin 1 (DEFB1) (Bos taurus (Bovine)).